The primary structure comprises 341 residues: RNA 3'-terminal phosphate cyclase (341 aa).

ATP contacts are provided by residues Gln102 and 283-287; that span reads HLADQ. The active-site Tele-AMP-histidine intermediate is the His308.

This sequence belongs to the RNA 3'-terminal cyclase family. Type 1 subfamily.

Its subcellular location is the cytoplasm. The enzyme catalyses a 3'-end 3'-phospho-ribonucleotide-RNA + ATP = a 3'-end 2',3'-cyclophospho-ribonucleotide-RNA + AMP + diphosphate. Functionally, catalyzes the conversion of 3'-phosphate to a 2',3'-cyclic phosphodiester at the end of RNA. The mechanism of action of the enzyme occurs in 3 steps: (A) adenylation of the enzyme by ATP; (B) transfer of adenylate to an RNA-N3'P to produce RNA-N3'PP5'A; (C) and attack of the adjacent 2'-hydroxyl on the 3'-phosphorus in the diester linkage to produce the cyclic end product. The biological role of this enzyme is unknown but it is likely to function in some aspects of cellular RNA processing. This is RNA 3'-terminal phosphate cyclase from Pseudomonas aeruginosa (strain UCBPP-PA14).